A 292-amino-acid polypeptide reads, in one-letter code: Ribosomal protein L11 methyltransferase (292 aa).

S-adenosyl-L-methionine is bound by residues Thr138, Gly159, Asp181, and Asn225.

It belongs to the methyltransferase superfamily. PrmA family.

The protein localises to the cytoplasm. It catalyses the reaction L-lysyl-[protein] + 3 S-adenosyl-L-methionine = N(6),N(6),N(6)-trimethyl-L-lysyl-[protein] + 3 S-adenosyl-L-homocysteine + 3 H(+). In terms of biological role, methylates ribosomal protein L11. In Leuconostoc citreum (strain KM20), this protein is Ribosomal protein L11 methyltransferase.